Consider the following 103-residue polypeptide: V-type sodium ATPase subunit G (103 aa).

Belongs to the V-ATPase F subunit family.

In terms of biological role, involved in ATP-driven sodium extrusion. The protein is V-type sodium ATPase subunit G (ntpG) of Enterococcus hirae (strain ATCC 9790 / DSM 20160 / JCM 8729 / LMG 6399 / NBRC 3181 / NCIMB 6459 / NCDO 1258 / NCTC 12367 / WDCM 00089 / R).